A 348-amino-acid polypeptide reads, in one-letter code: Uroporphyrinogen decarboxylase (348 aa).

Residues 27–31, Phe46, Asp76, Tyr152, Ser207, and His320 each bind substrate; that span reads RQAGR.

It belongs to the uroporphyrinogen decarboxylase family. In terms of assembly, homodimer.

It localises to the cytoplasm. It catalyses the reaction uroporphyrinogen III + 4 H(+) = coproporphyrinogen III + 4 CO2. The protein operates within porphyrin-containing compound metabolism; protoporphyrin-IX biosynthesis; coproporphyrinogen-III from 5-aminolevulinate: step 4/4. Catalyzes the decarboxylation of four acetate groups of uroporphyrinogen-III to yield coproporphyrinogen-III. In Bacillus anthracis, this protein is Uroporphyrinogen decarboxylase.